The following is a 342-amino-acid chain: Aristolochene synthase prx2 (342 aa).

Mg(2+) is bound by residues aspartate 115, asparagine 244, serine 248, and glutamate 252. Positions 340 and 341 each coordinate (2E,6E)-farnesyl diphosphate.

This sequence belongs to the terpene synthase family. As to quaternary structure, homodimer. Mg(2+) serves as cofactor.

It carries out the reaction (2E,6E)-farnesyl diphosphate = (+)-aristolochene + diphosphate. It functions in the pathway sesquiterpene biosynthesis; aristolochene biosynthesis; aristolochene from farnesyl diphosphate: step 1/1. Aristolochene synthase; part of the gene cluster that mediates the biosynthesis of PR-toxin, a bicyclic sesquiterpene belonging to the eremophilane class and acting as a mycotoxin. The first step of the pathway is catalyzed by the aristolochene synthase which performs the cyclization of trans,trans-farnesyl diphosphate (FPP) to the bicyclic sesquiterpene aristolochene. Following the formation of aristolochene, the non-oxygenated aristolochene is converted to the trioxygenated intermediate eremofortin B, via 7-epi-neopetasone. This conversion appears to involve three enzymes, a hydroxysterol oxidase-like enzyme, the quinone-oxidase prx3 that forms the quinone-type-structure in the bicyclic nucleus of aristolochene with the C8-oxo group and the C-3 hydroxyl group, and the P450 monooxygenase prx9 that introduces the epoxide at the double bond between carbons 1 and 2. No monoxy or dioxy-intermediates have been reported to be released to the broth, so these three early oxidative reactions may be coupled together. Eremofortin B is further oxidized by another P450 monooxygenase, that introduces a second epoxide between carbons 7 and 11 prior to acetylation to eremofortin A by the acetyltransferase prx11. The second epoxidation may be performed by a second P450 monooxygenase. After the acetylation step, the conversion of eremofortin A to eremofortin C and then to PR-toxin requires only two enzymes. First the conversion of eremofortin A to eremofortin C proceeds by oxidation of the side chain of the molecule at C-12 and is catalyzed by the short-chain oxidoreductase prx1. The cytochrome P450 monooxygenase prx8 also plays a role in this step. The primary alcohol formed at C-12 is finally oxidized by the short-chain alcohol dehydrogenase prx4 that forms PR-toxin. In Penicillium rubens (strain ATCC 28089 / DSM 1075 / NRRL 1951 / Wisconsin 54-1255) (Penicillium chrysogenum), this protein is Aristolochene synthase prx2.